The primary structure comprises 622 residues: Palmitoyltransferase pfa3 (622 aa).

The Cytoplasmic segment spans residues M1–C38. A helical transmembrane segment spans residues T39–V59. Over D60–S76 the chain is Vacuolar. A helical membrane pass occupies residues Y77 to F97. Residues T98 to K175 are Cytoplasmic-facing. Residues R132–I182 enclose the DHHC domain. A helical membrane pass occupies residues A176 to A196. Residues S197–N217 lie on the Vacuolar side of the membrane. The chain crosses the membrane as a helical span at residues Y218–W238. Over H239–D622 the chain is Cytoplasmic. 3 disordered regions span residues P298–A334, R419–D507, and D533–D622. Over residues R302–R311 the composition is skewed to basic and acidic residues. Residues T313–P330 are compositionally biased toward polar residues. Positions R419–Q428 are enriched in basic and acidic residues. A compositionally biased stretch (polar residues) spans Y443–P455. Low complexity predominate over residues P466–R488. Residues D533 to F547 show a composition bias toward acidic residues. Residues N610–D622 show a composition bias toward basic and acidic residues.

This sequence belongs to the DHHC palmitoyltransferase family. PFA3 subfamily. Post-translationally, autopalmitoylated.

It localises to the vacuole membrane. The enzyme catalyses L-cysteinyl-[protein] + hexadecanoyl-CoA = S-hexadecanoyl-L-cysteinyl-[protein] + CoA. Its function is as follows. Palmitoyltransferase specific for vac8. Palmitoylates vac8 at one or more of its N-terminal cysteine residues, which is required for its proper membrane localization. This is Palmitoyltransferase pfa3 (ptr-3) from Neurospora crassa (strain ATCC 24698 / 74-OR23-1A / CBS 708.71 / DSM 1257 / FGSC 987).